The sequence spans 541 residues: Chaperonin GroEL 2 (541 aa).

ATP is bound by residues 29 to 32 (TLGP), 86 to 90 (DGTTT), Gly-413, 476 to 478 (NAA), and Asp-492.

The protein belongs to the chaperonin (HSP60) family. In terms of assembly, forms a cylinder of 14 subunits composed of two heptameric rings stacked back-to-back. Interacts with the co-chaperonin GroES.

The protein resides in the secreted. It is found in the capsule. The protein localises to the cell surface. Its subcellular location is the cell wall. The catalysed reaction is ATP + H2O + a folded polypeptide = ADP + phosphate + an unfolded polypeptide.. In terms of biological role, together with its co-chaperonin GroES, plays an essential role in assisting protein folding. The GroEL-GroES system forms a nano-cage that allows encapsulation of the non-native substrate proteins and provides a physical environment optimized to promote and accelerate protein folding. The sequence is that of Chaperonin GroEL 2 from Mycobacterium ulcerans (strain Agy99).